The sequence spans 128 residues: Sulfurtransferase TusD (128 aa).

C78 (cysteine persulfide intermediate) is an active-site residue.

This sequence belongs to the DsrE/TusD family. Heterohexamer, formed by a dimer of trimers. The hexameric TusBCD complex contains 2 copies each of TusB, TusC and TusD. The TusBCD complex interacts with TusE.

The protein resides in the cytoplasm. Functionally, part of a sulfur-relay system required for 2-thiolation of 5-methylaminomethyl-2-thiouridine (mnm(5)s(2)U) at tRNA wobble positions. Accepts sulfur from TusA and transfers it in turn to TusE. The polypeptide is Sulfurtransferase TusD (Salmonella dublin (strain CT_02021853)).